A 263-amino-acid polypeptide reads, in one-letter code: Endonuclease 8 (263 aa).

The Schiff-base intermediate with DNA role is filled by Pro2. Glu3 functions as the Proton donor in the catalytic mechanism. The active-site Proton donor; for beta-elimination activity is Lys53. 3 residues coordinate DNA: Gln70, Arg125, and Asn169. Residues 229–263 form an FPG-type zinc finger; the sequence is KVFHRDGELCERCGGIIEKTTLSSRPFYWCPGCQH. Arg253 acts as the Proton donor; for delta-elimination activity in catalysis.

Belongs to the FPG family. Requires Zn(2+) as cofactor.

The catalysed reaction is 2'-deoxyribonucleotide-(2'-deoxyribose 5'-phosphate)-2'-deoxyribonucleotide-DNA = a 3'-end 2'-deoxyribonucleotide-(2,3-dehydro-2,3-deoxyribose 5'-phosphate)-DNA + a 5'-end 5'-phospho-2'-deoxyribonucleoside-DNA + H(+). Functionally, involved in base excision repair of DNA damaged by oxidation or by mutagenic agents. Acts as a DNA glycosylase that recognizes and removes damaged bases. Has a preference for oxidized pyrimidines, such as thymine glycol, 5,6-dihydrouracil and 5,6-dihydrothymine. Has AP (apurinic/apyrimidinic) lyase activity and introduces nicks in the DNA strand. Cleaves the DNA backbone by beta-delta elimination to generate a single-strand break at the site of the removed base with both 3'- and 5'-phosphates. This Escherichia coli O157:H7 protein is Endonuclease 8.